Reading from the N-terminus, the 122-residue chain is MIRPQTRLKVADNTGAKEIMCIRLLGGSNRKYSNVGDIIVASVKSATPGGVVKKGEVVKAVIVRTKKGIARKDGTYIRFDDNAAVIIRDDKQPRGTRIFGPVARELRDKDFMKIISLAPEVL.

Belongs to the universal ribosomal protein uL14 family. As to quaternary structure, part of the 50S ribosomal subunit. Forms a cluster with proteins L3 and L19. In the 70S ribosome, L14 and L19 interact and together make contacts with the 16S rRNA in bridges B5 and B8.

In terms of biological role, binds to 23S rRNA. Forms part of two intersubunit bridges in the 70S ribosome. The chain is Large ribosomal subunit protein uL14 from Caldanaerobacter subterraneus subsp. tengcongensis (strain DSM 15242 / JCM 11007 / NBRC 100824 / MB4) (Thermoanaerobacter tengcongensis).